The primary structure comprises 274 residues: Acetyl-coenzyme A carboxylase carboxyl transferase subunit alpha (274 aa).

Residues 2–250 enclose the CoA carboxyltransferase C-terminal domain; the sequence is NKEFIKSIVV…KKEIMNAMNE (249 aa).

Belongs to the AccA family. As to quaternary structure, acetyl-CoA carboxylase is a heterohexamer composed of biotin carboxyl carrier protein (AccB), biotin carboxylase (AccC) and two subunits each of ACCase subunit alpha (AccA) and ACCase subunit beta (AccD).

The protein resides in the cytoplasm. It carries out the reaction N(6)-carboxybiotinyl-L-lysyl-[protein] + acetyl-CoA = N(6)-biotinyl-L-lysyl-[protein] + malonyl-CoA. Its pathway is lipid metabolism; malonyl-CoA biosynthesis; malonyl-CoA from acetyl-CoA: step 1/1. Functionally, component of the acetyl coenzyme A carboxylase (ACC) complex. First, biotin carboxylase catalyzes the carboxylation of biotin on its carrier protein (BCCP) and then the CO(2) group is transferred by the carboxyltransferase to acetyl-CoA to form malonyl-CoA. The sequence is that of Acetyl-coenzyme A carboxylase carboxyl transferase subunit alpha from Clostridium botulinum (strain Alaska E43 / Type E3).